The sequence spans 878 residues: MIFGTPNSTFLENRLGSSTGMPFSSATSLNSGVDQMMNELNIQQPTSHTVLFDLSWEVAKKVGGIYTVLKTKAPVTVEEYKSRYALIGPYNASTAPTEFEPLIPGPLSSPIIENMMKKYGIHVHFGKWLVEGYPKVFLIDLHSSMHKLGEWRWDLMSGFEQAGDNETNETIVFGYQSALLLKEFAEANPNDKYIAHFHEWQASVGLILLKKWKVPVSTIFTTHATLLGRYLAAGGVDLYNQMQVLNMDFEASKRGIYHRHWIEKKSAADSHVFTTVSEITGYESEHILMRKPDVILPNGLKLDKFTALHEFQNLHAKYKGVLNEFVRGHFYGHYSDFDLDNTLYVFTAGRHEYFNKGVDMFLDSLAGLNKLLQQSGSKMTVVAFIIMPAATNNFNVESLKGHSYLKDMRRTCNTIVEAMGERLFEATSRGKMISPEELLSQEDLVMLKRRIFALKQKSSGPPVVTHNMINDNDEILQHIRRIKLFNSQEDRVKVIYHPEFLTSTNPLIPLDYTEFVRGCHLGIFPSYYEPFGMTPAECCASGCPSITSNLTGFANYMSRALQDTDSKGIFIVDRRFKSSRETVDQMTQYLWKFTQLDRRQRIELRNATEKLSELLDWRTLGKFYKTARALALERAFPPKPISRSPSPSPSSSLKLSTGLSNQIELQQQQQQQQPQPIGTTINLIPPSSNVSVTPTTTPTTTTTATTATTAPITTPKPNVIPINTGKENITLLSPNSMSSLLSDSLNEFKKQQQQQQQSKTPTTPTTTSTTTTTPSTTAAATNKSVLSNPTPTPSPNTSSFIPTNKGSTATTTTTTATPTPTPSNNTNGKPFNPIEALTKSNSSSNFATTSTASVNTNNGGTNSPVSKSIPIPSSKSLK.

K61 is a binding site for UDP-alpha-D-glucose. Disordered regions lie at residues 637 to 721 (PPKP…NVIP) and 746 to 878 (NEFK…KSLK). Low complexity-rich tracts occupy residues 641–656 (ISRS…LKLS) and 666–676 (QQQQQQQQPQP). Polar residues predominate over residues 677–692 (IGTTINLIPPSSNVSV). 4 stretches are compositionally biased toward low complexity: residues 693 to 715 (TPTT…ITTP), 746 to 781 (NEFK…AAAT), 795 to 830 (PNTS…NGKP), and 838 to 878 (TKSN…KSLK).

It belongs to the glycosyltransferase 3 family.

It catalyses the reaction [(1-&gt;4)-alpha-D-glucosyl](n) + UDP-alpha-D-glucose = [(1-&gt;4)-alpha-D-glucosyl](n+1) + UDP + H(+). Its pathway is glycan biosynthesis; glycogen biosynthesis. Catalyzes the formation of apha-1,4 glycosidic bonds adding glucose residue from UDPG to the growing chain of glycogen. This chain is Glycogen [starch] synthase (glcS), found in Dictyostelium discoideum (Social amoeba).